The sequence spans 137 residues: Large ribosomal subunit protein bL17 (137 aa).

This sequence belongs to the bacterial ribosomal protein bL17 family. In terms of assembly, part of the 50S ribosomal subunit. Contacts protein L32.

In Rickettsia typhi (strain ATCC VR-144 / Wilmington), this protein is Large ribosomal subunit protein bL17.